The following is a 336-amino-acid chain: Myb family transcription factor PHL8 (336 aa).

One can recognise an HTH myb-type domain in the interval 31 to 91 (TDAKPRLKWT…HLQKYRLGKS (61 aa)). Positions 62–87 (PKGLMKVMEIPGLTLYHLKSHLQKYR) form a DNA-binding region, H-T-H motif. The tract at residues 100–134 (EVSSASENQEVESKNDSRDLRGCSVTEENSNPAKE) is disordered. Basic and acidic residues predominate over residues 110–120 (VESKNDSRDLR). The stretch at 139–159 (TEALQMQMEVQKKLHEQIEVQ) forms a coiled coil. An LHEQLE motif is present at residues 152-157 (LHEQIE).

The protein belongs to the MYB-CC family.

Its subcellular location is the nucleus. The chain is Myb family transcription factor PHL8 from Arabidopsis thaliana (Mouse-ear cress).